Consider the following 272-residue polypeptide: Ribosomal RNA small subunit methyltransferase A (272 aa).

6 residues coordinate S-adenosyl-L-methionine: Asn18, Leu20, Gly45, Glu66, Asp91, and Asn113.

Belongs to the class I-like SAM-binding methyltransferase superfamily. rRNA adenine N(6)-methyltransferase family. RsmA subfamily.

It localises to the cytoplasm. It catalyses the reaction adenosine(1518)/adenosine(1519) in 16S rRNA + 4 S-adenosyl-L-methionine = N(6)-dimethyladenosine(1518)/N(6)-dimethyladenosine(1519) in 16S rRNA + 4 S-adenosyl-L-homocysteine + 4 H(+). Functionally, specifically dimethylates two adjacent adenosines (A1518 and A1519) in the loop of a conserved hairpin near the 3'-end of 16S rRNA in the 30S particle. May play a critical role in biogenesis of 30S subunits. The polypeptide is Ribosomal RNA small subunit methyltransferase A (Yersinia pseudotuberculosis serotype O:1b (strain IP 31758)).